We begin with the raw amino-acid sequence, 377 residues long: Anhydro-N-acetylmuramic acid kinase (377 aa).

Gly-18–Asp-25 lines the ATP pocket.

It belongs to the anhydro-N-acetylmuramic acid kinase family.

It carries out the reaction 1,6-anhydro-N-acetyl-beta-muramate + ATP + H2O = N-acetyl-D-muramate 6-phosphate + ADP + H(+). The protein operates within amino-sugar metabolism; 1,6-anhydro-N-acetylmuramate degradation. It participates in cell wall biogenesis; peptidoglycan recycling. Its function is as follows. Catalyzes the specific phosphorylation of 1,6-anhydro-N-acetylmuramic acid (anhMurNAc) with the simultaneous cleavage of the 1,6-anhydro ring, generating MurNAc-6-P. Is required for the utilization of anhMurNAc either imported from the medium or derived from its own cell wall murein, and thus plays a role in cell wall recycling. This Xanthomonas campestris pv. campestris (strain 8004) protein is Anhydro-N-acetylmuramic acid kinase.